We begin with the raw amino-acid sequence, 129 residues long: Small ribosomal subunit protein uS11 (129 aa).

The protein belongs to the universal ribosomal protein uS11 family. Part of the 30S ribosomal subunit. Interacts with proteins S7 and S18. Binds to IF-3.

Functionally, located on the platform of the 30S subunit, it bridges several disparate RNA helices of the 16S rRNA. Forms part of the Shine-Dalgarno cleft in the 70S ribosome. This chain is Small ribosomal subunit protein uS11, found in Beijerinckia indica subsp. indica (strain ATCC 9039 / DSM 1715 / NCIMB 8712).